Here is a 951-residue protein sequence, read N- to C-terminus: MEKTYNPQDIEQPLYEHWEKQGYFKPNGDESQESFCIMIPPPNVTGSLHMGHAFQQTIMDTMIRYQRMQGKNTLWQVGTDHAGIATQMVVERKIAAEEGKTRHDYGREAFIDKIWEWKAESGGTITRQMRRLGNSVDWERERFTMDEGLSNAVKEVFVRLYKEDLIYRGKRLVNWDPKLRTAISDLEVENRESKGSMWHIRYPLADGAKAADGKDYLVVATTRPETLLGDTGVAVNPEDPRYKDLIGKYVILPLVNRRIPIVGDEHAYMEKGTGCVKITPAHDFNDYEVGKRHALPMINILTFDGDIRESAQVFDTKGNESDVYSSEIPAEFQKLERFAARKAVVAAVDALGLLEEIKPHDLTVPYGDRGGVVIEPMLTDQWYVRADVLAKPAVEAVENGDIQFVPKQYENMYFSWMRDIQDWCISRQLWWGHRIPAWYDEAGNVYVGRNEEEVRKENNLGADVALRQDEDVLDTWFSSALWTFSTLGWPENTDALRQFHPSSVMVSGFDIIFFWIARMIMMTMHFIKDENGTPQVPFHTVYMTGLIRDDEGQKMSKSKGNVIDPLDMVDGISLPELLEKRTGNMMQPQLADKIRKRTEKQFPNGIEPHGTDALRFTLAALASTGRDINWDMKRLEGYRNFCNKLWNASRFVLMNTEGQDCGFNGGEMTLSLADRWILAEFNQTIKAYREALDSFRFDIAAGILYEFTWNQFCDWYLELTKPVMNGGTEAELRGTHHTLVTVLEGLLRLAHPIIPFITETIWQRVKVLCGITADTIMLQPFPQYDASQVDEAALADTEWLKQAIVAVRNIRAEMNIAPGKPLELLLRGCSADAERRVNENRGFLQTLARLESITVLPADDKGPVSVTKIIDGAELLIPMAGLINKEDELARLAKEVAKIEGEISRIENKLANEGFVARAPEAVIAKEREKLEGYAEAKAKLIEQQAVIAAL.

A 'HIGH' region motif is present at residues 42–52 (PNVTGSLHMGH). Positions 554 to 558 (KMSKS) match the 'KMSKS' region motif. Residue Lys-557 participates in ATP binding. The stretch at 880–944 (AGLINKEDEL…AEAKAKLIEQ (65 aa)) forms a coiled coil.

The protein belongs to the class-I aminoacyl-tRNA synthetase family. ValS type 1 subfamily. In terms of assembly, monomer.

Its subcellular location is the cytoplasm. The enzyme catalyses tRNA(Val) + L-valine + ATP = L-valyl-tRNA(Val) + AMP + diphosphate. Catalyzes the attachment of valine to tRNA(Val). As ValRS can inadvertently accommodate and process structurally similar amino acids such as threonine, to avoid such errors, it has a 'posttransfer' editing activity that hydrolyzes mischarged Thr-tRNA(Val) in a tRNA-dependent manner. The chain is Valine--tRNA ligase from Shigella dysenteriae serotype 1 (strain Sd197).